The following is a 259-amino-acid chain: Small ribosomal subunit protein uS2 (259 aa).

The tract at residues 232 to 259 (KAMEAEETKAAEKAVETEAKEETPQEAK) is disordered.

The protein belongs to the universal ribosomal protein uS2 family.

The protein is Small ribosomal subunit protein uS2 of Maridesulfovibrio salexigens (strain ATCC 14822 / DSM 2638 / NCIMB 8403 / VKM B-1763) (Desulfovibrio salexigens).